A 156-amino-acid chain; its full sequence is Small ribosomal subunit protein uS7 (156 aa).

This sequence belongs to the universal ribosomal protein uS7 family. Part of the 30S ribosomal subunit. Contacts proteins S9 and S11.

In terms of biological role, one of the primary rRNA binding proteins, it binds directly to 16S rRNA where it nucleates assembly of the head domain of the 30S subunit. Is located at the subunit interface close to the decoding center, probably blocks exit of the E-site tRNA. This chain is Small ribosomal subunit protein uS7, found in Syntrophus aciditrophicus (strain SB).